Reading from the N-terminus, the 294-residue chain is uncharacterized protein (294 aa).

Residues 1–32 (MSHLKDPTTQYYTGEYPKQKQPTPGIQAKMTP) form a disordered region. Lys-39 is subject to N6-acetyllysine. Residue 53–77 (LVTGGDSGIGRAAAIAYAREGADVA) coordinates NADP(+). Ser-186 serves as a coordination point for substrate. Tyr-199 (proton acceptor) is an active-site residue.

Belongs to the short-chain dehydrogenases/reductases (SDR) family.

This is an uncharacterized protein from Escherichia coli (strain K12).